We begin with the raw amino-acid sequence, 303 residues long: MNAYLDISPEVQTALAAGEPVVALESTIISHGMPWPQNAETALQVEQIVRDNGAVPATIAIIKGRLKVGLSKEEIEYLGKAGLNVTKASRRDIPFIIARGGDGATTVASTMILAAMAGVKVFATGGIGGVHRGAQETFDISADLQELAHTNVAVICAGAKSILDLGLTREYLETHGVPLVGYQTSTLPAFYTRDSDFDVDYQLDTPEQIAQALQAKWEMGLQGGVVIANPIPEAYAMDRGKIDAAISAALAEMDDKGVSGKDSTPFLLAKVAEITGGDSLKANIQLVFNNAALAARIAASYYA.

The active-site Proton donor is the Glu-25. 2 residues coordinate substrate: Lys-87 and Val-107. Asp-139 serves as a coordination point for Mn(2+). Residue 141–143 participates in substrate binding; that stretch reads SAD. The Nucleophile role is filled by Lys-160.

It belongs to the pseudouridine-5'-phosphate glycosidase family. In terms of assembly, homotrimer. Mn(2+) serves as cofactor.

The enzyme catalyses D-ribose 5-phosphate + uracil = psi-UMP + H2O. Functionally, catalyzes the reversible cleavage of pseudouridine 5'-phosphate (PsiMP) to ribose 5-phosphate and uracil. Functions biologically in the cleavage direction, as part of a pseudouridine degradation pathway. The protein is Pseudouridine-5'-phosphate glycosidase of Hahella chejuensis (strain KCTC 2396).